The sequence spans 243 residues: Uridylate kinase (243 aa).

ATP is bound at residue 12 to 15 (KLSG). Residues 20 to 25 (GPGGSG) form an involved in allosteric activation by GTP region. Residue glycine 56 participates in UMP binding. ATP is bound by residues glycine 57 and arginine 61. UMP is bound by residues aspartate 76 and 137 to 144 (TGSPYFST). ATP is bound by residues asparagine 165, tyrosine 171, and aspartate 174.

The protein belongs to the UMP kinase family. Homohexamer.

It localises to the cytoplasm. It carries out the reaction UMP + ATP = UDP + ADP. It participates in pyrimidine metabolism; CTP biosynthesis via de novo pathway; UDP from UMP (UMPK route): step 1/1. With respect to regulation, allosterically activated by GTP. Inhibited by UTP. Its function is as follows. Catalyzes the reversible phosphorylation of UMP to UDP. This Oenococcus oeni (strain ATCC BAA-331 / PSU-1) protein is Uridylate kinase.